Reading from the N-terminus, the 257-residue chain is Hydroxyacylglutathione hydrolase (257 aa).

Zn(2+)-binding residues include histidine 54, histidine 56, aspartate 58, histidine 59, histidine 110, aspartate 131, and histidine 169.

This sequence belongs to the metallo-beta-lactamase superfamily. Glyoxalase II family. Monomer. Zn(2+) serves as cofactor.

The catalysed reaction is an S-(2-hydroxyacyl)glutathione + H2O = a 2-hydroxy carboxylate + glutathione + H(+). It functions in the pathway secondary metabolite metabolism; methylglyoxal degradation; (R)-lactate from methylglyoxal: step 2/2. In terms of biological role, thiolesterase that catalyzes the hydrolysis of S-D-lactoyl-glutathione to form glutathione and D-lactic acid. The polypeptide is Hydroxyacylglutathione hydrolase (Hahella chejuensis (strain KCTC 2396)).